A 462-amino-acid polypeptide reads, in one-letter code: Protein ultraspiracle homolog (462 aa).

The modulating stretch occupies residues 1–113 (MSSVAKKDKR…NHPLSGSKHL (113 aa)). 2 consecutive NR C4-type zinc fingers follow at residues 114–134 (CSIC…CEGC) and 150–174 (CRED…YQKC). Positions 114–179 (CSICGDRASG…RYQKCLACGM (66 aa)) form a DNA-binding region, nuclear receptor. The segment at 180-201 (KREAVQEERQRAARRTEDAHPS) is hinge. One can recognise an NR LBD domain in the interval 204–453 (VQELSIERLL…SYIRDALCNH (250 aa)).

The protein belongs to the nuclear hormone receptor family. NR2 subfamily. Heterodimer of USP and ECR. As to expression, abundant expression seen in males and ovaries.

It localises to the nucleus. The protein is Protein ultraspiracle homolog (USP) of Bombyx mori (Silk moth).